Reading from the N-terminus, the 416-residue chain is Phosphoglycerate kinase (416 aa).

(2R)-3-phosphoglycerate contacts are provided by V23, D24, F25, N26, N38, R39, S62, H63, G65, R66, L121, R122, H169, and R170. G213 contributes to the ADP binding site. G213 contacts CDP. AMP contacts are provided by A214 and K215. A214 and K215 together coordinate ATP. A214 provides a ligand contact to Mg(2+). D218 lines the CDP pocket. A Mg(2+)-binding site is contributed by D218. K219 contributes to the AMP binding site. An ATP-binding site is contributed by K219. G237 is a binding site for ADP. G237 contacts CDP. AMP contacts are provided by G238 and G312. Residues G238 and G312 each coordinate ATP. CDP is bound by residues G337 and F342. F342 is a binding site for ADP. E343 serves as a coordination point for AMP. Residue D374 participates in Mg(2+) binding. T375 is a binding site for ATP.

This sequence belongs to the phosphoglycerate kinase family. Monomer. Requires Mg(2+) as cofactor.

The enzyme catalyses (2R)-3-phosphoglycerate + ATP = (2R)-3-phospho-glyceroyl phosphate + ADP. Its pathway is carbohydrate degradation; glycolysis; pyruvate from D-glyceraldehyde 3-phosphate: step 2/5. This is Phosphoglycerate kinase (PGK) from Plasmodium falciparum (isolate 3D7).